A 341-amino-acid polypeptide reads, in one-letter code: Methionine import ATP-binding protein MetN (341 aa).

Residues 2–241 (INLQDVSKVY…PKEQMTKRFV (240 aa)) enclose the ABC transporter domain. 38 to 45 (GYSGAGKS) is an ATP binding site.

This sequence belongs to the ABC transporter superfamily. Methionine importer (TC 3.A.1.24) family. As to quaternary structure, the complex is composed of two ATP-binding proteins (MetN), two transmembrane proteins (MetP) and a solute-binding protein (MetQ).

It localises to the cell membrane. It catalyses the reaction L-methionine(out) + ATP + H2O = L-methionine(in) + ADP + phosphate + H(+). The enzyme catalyses D-methionine(out) + ATP + H2O = D-methionine(in) + ADP + phosphate + H(+). Functionally, part of the ABC transporter complex MetNPQ involved in methionine import. Responsible for energy coupling to the transport system. It has also been shown to be involved in methionine sulfoxide transport. The polypeptide is Methionine import ATP-binding protein MetN (Bacillus subtilis (strain 168)).